The chain runs to 5068 residues: Protein piccolo (5068 aa).

The span at 1–20 shows a compositional bias: low complexity; that stretch reads MGNEASLEGEGLPEGLAAAA. Disordered stretches follow at residues 1-143 and 173-524; these read MGNE…DFKE and FDLI…QAPA. The segment covering 93 to 102 has biased composition (pro residues); that stretch reads PGKPPDPGRP. Composition is skewed to basic and acidic residues over residues 111-122, 133-143, and 185-199; these read RTTDTFRSEQKL, KESKSRTDFKE, and ETTK…DQGK. Position 212 is a phosphoserine (Ser-212). Over residues 232–241 the composition is skewed to polar residues; it reads PSKSVSSQQA. Residues 252 to 279 are compositionally biased toward low complexity; that stretch reads AKPSQQSPAQTPAQQAKPVAQQPGPAKA. Residues 319 to 334 show a composition bias toward polar residues; sequence TSLQQPGPKSLAQTPG. Composition is skewed to pro residues over residues 391-407 and 416-487; these read PTKP…PQPQ and PQQP…PQPQ. The tract at residues 401–500 is 10 X 10 AA tandem approximate repeats of P-A-K-P-Q-P-Q-Q-P-X; sequence PAKPQPQQPV…LGKPSAQQPS (100 aa). Residues 495–508 show a composition bias toward polar residues; sequence SAQQPSKSISQTVT. Residues 515–524 are compositionally biased toward low complexity; the sequence is PPTSAAQAPA. The segment at 532-556 adopts a C4-type zinc-finger fold; it reads CPLCNTTELLLHTPEKANFNTCTEC. Disordered stretches follow at residues 594 to 867, 883 to 1005, 1057 to 1345, and 1364 to 1803; these read AAIP…TVTG, LIST…TELN, LGDM…PSDL, and VGEK…SDPE. Polar residues predominate over residues 610–625; that stretch reads QPATASKSPVPSQQAS. Over residues 626–644 the composition is skewed to basic and acidic residues; it reads PKKELPSKQDSPKAPESKK. The segment covering 709-738 has biased composition (low complexity); the sequence is SPSSAAATSKPAILSSQVQAQAQVTTAPPL. Residues 782-795 show a composition bias toward basic and acidic residues; the sequence is ESKDPVQKKEEPKK. Low complexity predominate over residues 809–830; sequence VPKGSPTPSGTRPTTGQATPQS. Phosphoserine is present on residues Ser-844 and Ser-856. Polar residues-rich tracts occupy residues 856–865 and 883–893; these read SQPTTPQETV and LISTAGQQAPH. Thr-860 is modified (phosphothreonine). The segment at 997–1020 adopts a C4-type zinc-finger fold; that stretch reads CPLCRTELNVGSQDPPNFNTCTEC. Over residues 1073-1085 the composition is skewed to pro residues; the sequence is SPVPAPAEPPPQK. The segment covering 1097–1116 has biased composition (basic and acidic residues); it reads KETEVKAETEKQIPEKETPS. Position 1120 is a phosphothreonine (Thr-1120). 4 stretches are compositionally biased toward basic and acidic residues: residues 1144 to 1165, 1172 to 1186, 1244 to 1253, and 1262 to 1283; these read PEKK…KKPP, LEEK…KLPP, PKDRQKESRD, and TAKE…DKSD. Positions 1290-1306 are enriched in polar residues; sequence PKSPQGLSDTGYSSDGI. Phosphoserine is present on residues Ser-1292, Ser-1302, Ser-1303, Ser-1332, Ser-1334, Ser-1337, Ser-1338, and Ser-1341. The segment covering 1319 to 1333 has biased composition (basic and acidic residues); it reads SDEKDLLKGLKKDSF. Over residues 1334-1343 the composition is skewed to low complexity; the sequence is SQESSPSSPS. The segment covering 1374-1392 has biased composition (polar residues); it reads PQKVSPEQPQDQQKTQTPS. Residues 1405–1444 show a composition bias toward basic and acidic residues; the sequence is KESQEKKVTSKKDSAQGFPSRKEHKENPELVDDLSPRRAS. 9 positions are modified to phosphoserine: Ser-1439, Ser-1451, Ser-1452, Ser-1454, Ser-1457, Ser-1481, Ser-1484, Ser-1505, and Ser-1507. Over residues 1499–1511 the composition is skewed to acidic residues; sequence SADEDASGSEDEE. Residue Thr-1552 is modified to Phosphothreonine. A phosphoserine mark is found at Ser-1553, Ser-1563, and Ser-1575. Over residues 1566–1575 the composition is skewed to acidic residues; that stretch reads DEDDETFDES. Positions 1576–1587 are enriched in basic and acidic residues; that stretch reads PELKFRETKSQE. The span at 1606 to 1624 shows a compositional bias: polar residues; that stretch reads ELNSTVTDKYSAESSQKKT. Acidic residues predominate over residues 1628–1638; it reads FDEEPELEMES. Ser-1638 carries the post-translational modification Phosphoserine. Thr-1640 is subject to Phosphothreonine. A phosphoserine mark is found at Ser-1642 and Ser-1647. The span at 1650–1667 shows a compositional bias: polar residues; that stretch reads EGSSSLHASSFTPGTSPT. Over residues 1707–1720 the composition is skewed to acidic residues; it reads DSSEEEELREEEEL. Phosphoserine is present on residues Ser-1708 and Ser-1709. Residues 1721-1734 show a composition bias toward basic and acidic residues; that stretch reads LKEQEKQRELEQQQ. Thr-1760 carries the post-translational modification Phosphothreonine. Ser-1766 is subject to Phosphoserine. Over residues 1775–1790 the composition is skewed to basic and acidic residues; that stretch reads EELRQAAEMEELHRSS. Phosphoserine is present on residues Ser-1795, Ser-1800, Ser-1808, and Ser-1829. 2 disordered regions span residues 2104–2126 and 2261–2377; these read PSES…ISSV and EAEL…AAAA. Residues 2109–2126 are compositionally biased toward low complexity; the sequence is TSVPPSDTPSLTSSISSV. Positions 2277-2291 are enriched in polar residues; the sequence is TPSSQTKEQPGSPHS. Residues 2334-2368 are compositionally biased toward pro residues; that stretch reads QPPPPPPPPPPPPPPPPPPPPPPLPPATSPKPPTY. Ser-2495 is modified (phosphoserine). A glycan (O-linked (GlcNAc) threonine) is linked at Thr-2686. An O-linked (GlcNAc) serine glycan is attached at Ser-2960. Thr-2998 bears the Phosphothreonine mark. 2 disordered regions span residues 3334–3443 and 3490–3556; these read KEEK…SKVS and KGGS…LYSP. Ser-3358 is modified (phosphoserine). A compositionally biased stretch (basic and acidic residues) spans 3361 to 3370; that stretch reads DDPRNLKKIV. At Ser-3372 the chain carries Phosphoserine. Phosphothreonine is present on residues Thr-3376 and Thr-3403. Acidic residues predominate over residues 3403 to 3412; sequence TDDEDQDEWD. Positions 3495–3507 are enriched in polar residues; it reads GCQTETDPDTQSP. Phosphoserine occurs at positions 3506, 3514, 3545, 3549, 3555, 3558, 3561, 3582, 3608, 3610, and 3616. Disordered regions lie at residues 3576–3679 and 3760–3797; these read PLPD…RRRM and DYMS…QFIP. 2 stretches are compositionally biased toward polar residues: residues 3636–3645 and 3661–3673; these read KGSQTTSGTQ and STGT…TMGT. Residue Ser-3763 is modified to Phosphoserine. Positions 3773–3785 are enriched in basic and acidic residues; the sequence is SRVESQHGIERPR. Residues 3787–3797 show a composition bias toward polar residues; it reads APQTEFSQFIP. A phosphoserine mark is found at Ser-4016, Ser-4042, and Ser-4132. Disordered regions lie at residues 4207 to 4231 and 4254 to 4273; these read ADKP…GLDL and VSFG…LPIS. Over residues 4210-4231 the composition is skewed to low complexity; that stretch reads PYSSGSRSRPSSRPSSVYGLDL. A compositionally biased stretch (polar residues) spans 4257–4273; the sequence is GHSSSSARTKPTSLPIS. Residues Ser-4286, Ser-4290, Ser-4293, Ser-4322, and Ser-4358 each carry the phosphoserine modification. Residues 4317–4339 form a disordered region; sequence RDQFGSSHSLPEVQQHMREESRT. The PDZ domain maps to 4424–4518; the sequence is RIKITRDSKD…EAEICVRLDL (95 aa). The tract at residues 4574 to 4620 is disordered; the sequence is KGAHAHSGPTSAGSSSVPSPGQPGSPSVSKKKHGGSKPTDVSKTASH. Low complexity predominate over residues 4578–4601; it reads AHSGPTSAGSSSVPSPGQPGSPSV. Ser-4592 is modified (phosphoserine). The C2 1 domain maps to 4622-4751; the sequence is ITGEIQLQIN…SHLDNTPRWY (130 aa). 2 residues coordinate Ca(2+): Asp-4651 and Asp-4657. Position 4706 is a phosphoserine (Ser-4706). 4 residues coordinate Ca(2+): Asp-4721, Asp-4723, Ser-4726, and Asp-4729. Disordered regions lie at residues 4758–4834 and 4857–4891; these read ESIE…SVAQ and QPTK…SEGS. Composition is skewed to low complexity over residues 4766–4778 and 4805–4815; these read HSSQ…PKPS and SSPGSSKSSSE. A compositionally biased stretch (polar residues) spans 4823-4834; that stretch reads PSRSQSKTSVAQ. Positions 4870-4891 are enriched in low complexity; it reads SVSTGSSGSSVGSGYSVDSEGS. Positions 4933-5058 constitute a C2 2 domain; it reads VMGEIKLALK…DLRKRIVNWH (126 aa).

Interacts with BSN, ERC2/CAST1, RIMS1 and UNC13A. Interacts (via C-terminus) with TRIO (via N-terminus). Interacts with CTBP1. Interacts with SIAH1; this interaction negatively regulates SIAH1 E3 ligase activity. Directly interacts with GIT1 and GIT2. It depends on Ca(2+) as a cofactor. As to expression, highly expressed in brain. Moderately expressed in pituitary gland and pancreatic islets. Low levels found in stomach.

The protein localises to the presynaptic active zone. Its function is as follows. Scaffold protein of the presynaptic cytomatrix at the active zone (CAZ) which is the place in the synapse where neurotransmitter is released. After synthesis, participates in the formation of Golgi-derived membranous organelles termed Piccolo-Bassoon transport vesicles (PTVs) that are transported along axons to sites of nascent synaptic contacts. At the presynaptic active zone, regulates the spatial organization of synaptic vesicle cluster, the protein complexes that execute membrane fusion and compensatory endocytosis. Organizes as well the readily releasable pool of synaptic vesicles and safeguards a fraction of them to be not immediately available for action potential-induced release. Also functions in processes other than assembly such as the regulation of specific presynaptic protein ubiquitination by interacting with SIAH1 or the regulation of presynaptic autophagy. Also mediates synapse to nucleus communication leading to reconfiguration of gene expression by associating with the transcriptional corepressor CTBP1 and by subsequently reducing the size of its pool available for nuclear import. The sequence is that of Protein piccolo from Mus musculus (Mouse).